The primary structure comprises 31 residues: Sarcolipin (31 aa).

The Cytoplasmic segment spans residues methionine 1–glutamate 7. The helical transmembrane segment at leucine 8–valine 26 threads the bilayer. Over arginine 27–tyrosine 31 the chain is Lumenal.

Belongs to the sarcolipin family. As to quaternary structure, homooligomer. Can also form heterooligomers with other sarcoplasmic/endoplasmic reticulum calcium ATPase (SERCA) regulators ARLN, ERLN, PLN and STRIT1/DWORF. Monomer. Interacts with calcium ATPase ATP2A1/SERCA1. Interacts as a monomer with ATP2A2/SERCA2; the interaction decreases ATP2A2 Ca(2+) affinity. Interacts with VMP1; VMP1 competes with PLN and SLN to prevent them from forming an inhibitory complex with ATP2A2. In terms of tissue distribution, skeletal muscle (at protein level).

The protein resides in the sarcoplasmic reticulum membrane. It localises to the endoplasmic reticulum membrane. Functionally, reversibly inhibits the activity of ATP2A1/SERCA1 and ATP2A2/SERCA2 in sarcoplasmic reticulum by decreasing the apparent affinity of the ATPase for Ca(2+). Also inhibits the activity of ATP2A3/SERCA3. Modulates calcium re-uptake during muscle relaxation and plays an important role in calcium homeostasis in muscle. Required for muscle-based, non-shivering thermogenesis. This is Sarcolipin (SLN) from Oryctolagus cuniculus (Rabbit).